The chain runs to 88 residues: ATP synthase subunit 9, mitochondrial (88 aa).

2 helical membrane-spanning segments follow: residues 8-28 and 45-72; these read IGAG…GNVF and LFGY…LILF.

This sequence belongs to the ATPase C chain family. F-type ATPases have 2 components, CF(1) - the catalytic core - and CF(0) - the membrane proton channel. CF(1) has five subunits: alpha(3), beta(3), gamma(1), delta(1), epsilon(1). CF(0) has three main subunits: a, b and c.

It localises to the mitochondrion membrane. It carries out the reaction ATP + H2O + 4 H(+)(in) = ADP + phosphate + 5 H(+)(out). Its function is as follows. This protein is one of the chains of the nonenzymatic membrane component (F0) of mitochondrial ATPase. The polypeptide is ATP synthase subunit 9, mitochondrial (ATP9) (Beta vulgaris (Sugar beet)).